The sequence spans 159 residues: Probable inactive acireductone dioxygenase 1 (159 aa).

It belongs to the acireductone dioxygenase (ARD) family.

It is found in the cytoplasm. The protein resides in the nucleus. Functionally, probable inactive acireductone dioxygenase. In Caenorhabditis elegans, this protein is Probable inactive acireductone dioxygenase 1.